The primary structure comprises 678 residues: DNA ligase (678 aa).

NAD(+) is bound by residues 32–36 (DSEYD), 81–82 (SL), and Glu113. The N6-AMP-lysine intermediate role is filled by Lys115. The NAD(+) site is built by Arg136, Glu174, Lys291, and Lys315. 4 residues coordinate Zn(2+): Cys409, Cys412, Cys427, and Cys433. A BRCT domain is found at 596–678 (ASDNPFAGKT…MRLLGESSDA (83 aa)).

Belongs to the NAD-dependent DNA ligase family. LigA subfamily. Requires Mg(2+) as cofactor. The cofactor is Mn(2+).

It carries out the reaction NAD(+) + (deoxyribonucleotide)n-3'-hydroxyl + 5'-phospho-(deoxyribonucleotide)m = (deoxyribonucleotide)n+m + AMP + beta-nicotinamide D-nucleotide.. Functionally, DNA ligase that catalyzes the formation of phosphodiester linkages between 5'-phosphoryl and 3'-hydroxyl groups in double-stranded DNA using NAD as a coenzyme and as the energy source for the reaction. It is essential for DNA replication and repair of damaged DNA. The sequence is that of DNA ligase from Sodalis glossinidius (strain morsitans).